The following is a 305-amino-acid chain: Sulfate adenylyltransferase subunit 2 (305 aa).

It belongs to the PAPS reductase family. CysD subfamily. As to quaternary structure, heterodimer composed of CysD, the smaller subunit, and CysN.

The catalysed reaction is sulfate + ATP + H(+) = adenosine 5'-phosphosulfate + diphosphate. The protein operates within sulfur metabolism; hydrogen sulfide biosynthesis; sulfite from sulfate: step 1/3. Functionally, with CysN forms the ATP sulfurylase (ATPS) that catalyzes the adenylation of sulfate producing adenosine 5'-phosphosulfate (APS) and diphosphate, the first enzymatic step in sulfur assimilation pathway. APS synthesis involves the formation of a high-energy phosphoric-sulfuric acid anhydride bond driven by GTP hydrolysis by CysN coupled to ATP hydrolysis by CysD. The chain is Sulfate adenylyltransferase subunit 2 from Pseudomonas aeruginosa (strain LESB58).